Reading from the N-terminus, the 232-residue chain is Large ribosomal subunit protein uL1 (232 aa).

Belongs to the universal ribosomal protein uL1 family. Part of the 50S ribosomal subunit.

Functionally, binds directly to 23S rRNA. The L1 stalk is quite mobile in the ribosome, and is involved in E site tRNA release. Protein L1 is also a translational repressor protein, it controls the translation of the L11 operon by binding to its mRNA. The sequence is that of Large ribosomal subunit protein uL1 from Bartonella quintana (strain Toulouse) (Rochalimaea quintana).